Consider the following 268-residue polypeptide: Tryptophan synthase alpha chain (268 aa).

Active-site proton acceptor residues include E49 and D60.

Belongs to the TrpA family. In terms of assembly, tetramer of two alpha and two beta chains.

It carries out the reaction (1S,2R)-1-C-(indol-3-yl)glycerol 3-phosphate + L-serine = D-glyceraldehyde 3-phosphate + L-tryptophan + H2O. It functions in the pathway amino-acid biosynthesis; L-tryptophan biosynthesis; L-tryptophan from chorismate: step 5/5. Functionally, the alpha subunit is responsible for the aldol cleavage of indoleglycerol phosphate to indole and glyceraldehyde 3-phosphate. This Haemophilus influenzae (strain PittEE) protein is Tryptophan synthase alpha chain.